Reading from the N-terminus, the 509-residue chain is Protein MAIN-LIKE 1 (509 aa).

The interval 477–509 is disordered; that stretch reads GYGKRRRRNEHTPTPNNGGGNDISSLLLQKEDS. Residues 488-503 are compositionally biased toward polar residues; it reads TPTPNNGGGNDISSLL.

In terms of tissue distribution, expressed in root tips, the shoot apical meristem (SAM), leaves, mature flowers and embryos.

Its subcellular location is the nucleus. Acts as an important factor for cell fate determination and maintenance throughout plant development. Required for the organization of the root apical meristem (RAM) and the shoot apical meristem (SAM). Required to maintain genome stability and cell division activity in meristematic cells. The protein is Protein MAIN-LIKE 1 of Arabidopsis thaliana (Mouse-ear cress).